The chain runs to 495 residues: GTPase Der (495 aa).

2 EngA-type G domains span residues 3–166 (PVIA…MDAE) and 208–381 (IKLA…DCST). Residues 9-16 (GRPNVGKS), 56-60 (DTGGI), 118-121 (NKTD), 214-221 (GRPNVGKS), 261-265 (DTAGV), and 326-329 (NKWD) each bind GTP. Residues 382-466 (KRVGTSLLTR…PIRIQFKEGE (85 aa)) form the KH-like domain.

It belongs to the TRAFAC class TrmE-Era-EngA-EngB-Septin-like GTPase superfamily. EngA (Der) GTPase family. In terms of assembly, associates with the 50S ribosomal subunit.

Its function is as follows. GTPase that plays an essential role in the late steps of ribosome biogenesis. The chain is GTPase Der from Yersinia pseudotuberculosis serotype O:3 (strain YPIII).